Reading from the N-terminus, the 445-residue chain is Proline--tRNA ligase (445 aa).

Belongs to the class-II aminoacyl-tRNA synthetase family. ProS type 2 subfamily. Homodimer.

Its subcellular location is the cytoplasm. It carries out the reaction tRNA(Pro) + L-proline + ATP = L-prolyl-tRNA(Pro) + AMP + diphosphate. Functionally, catalyzes the attachment of proline to tRNA(Pro) in a two-step reaction: proline is first activated by ATP to form Pro-AMP and then transferred to the acceptor end of tRNA(Pro). This is Proline--tRNA ligase from Cereibacter sphaeroides (strain ATCC 17023 / DSM 158 / JCM 6121 / CCUG 31486 / LMG 2827 / NBRC 12203 / NCIMB 8253 / ATH 2.4.1.) (Rhodobacter sphaeroides).